A 285-amino-acid chain; its full sequence is Polyamine aminopropyltransferase (285 aa).

The 236-residue stretch at 2 to 237 (EFWFSELHSP…GYWLFGFASK (236 aa)) folds into the PABS domain. Gln31 lines the S-methyl-5'-thioadenosine pocket. Asp86 contacts spermidine. S-methyl-5'-thioadenosine contacts are provided by residues Glu106 and 137-138 (DA). Residue Asp155 is the Proton acceptor of the active site.

Belongs to the spermidine/spermine synthase family. In terms of assembly, homodimer or homotetramer.

The protein localises to the cytoplasm. It catalyses the reaction S-adenosyl 3-(methylsulfanyl)propylamine + putrescine = S-methyl-5'-thioadenosine + spermidine + H(+). Its pathway is amine and polyamine biosynthesis; spermidine biosynthesis; spermidine from putrescine: step 1/1. In terms of biological role, catalyzes the irreversible transfer of a propylamine group from the amino donor S-adenosylmethioninamine (decarboxy-AdoMet) to putrescine (1,4-diaminobutane) to yield spermidine. The sequence is that of Polyamine aminopropyltransferase from Lachnospira eligens (strain ATCC 27750 / DSM 3376 / VPI C15-48 / C15-B4) (Eubacterium eligens).